The following is a 355-amino-acid chain: Uroporphyrinogen decarboxylase (355 aa).

Substrate contacts are provided by residues 27–31 (RQAGR), Asp-77, Tyr-154, Thr-209, and His-328.

Belongs to the uroporphyrinogen decarboxylase family. In terms of assembly, homodimer.

It localises to the cytoplasm. The enzyme catalyses uroporphyrinogen III + 4 H(+) = coproporphyrinogen III + 4 CO2. It functions in the pathway porphyrin-containing compound metabolism; protoporphyrin-IX biosynthesis; coproporphyrinogen-III from 5-aminolevulinate: step 4/4. Catalyzes the decarboxylation of four acetate groups of uroporphyrinogen-III to yield coproporphyrinogen-III. The protein is Uroporphyrinogen decarboxylase of Dechloromonas aromatica (strain RCB).